Consider the following 172-residue polypeptide: uncharacterized protein (172 aa).

The Lumenal segment spans residues 1-101 (MEHVSKRSIG…RYDINTRPLV (101 aa)). The chain crosses the membrane as a helical span at residues 102-122 (VVLAISIVFFGCLLVLKDIII). At 123–145 (QSSENILSVSKWKIIGASFMGTP) the chain is on the cytoplasmic side. Residues 146–164 (YTGLLTGLVGPLLSPFSAV) form a helical membrane-spanning segment. Topologically, residues 165-172 (SSWLSFIF) are lumenal.

It is found in the endoplasmic reticulum membrane. This is an uncharacterized protein from Saccharomyces cerevisiae (strain ATCC 204508 / S288c) (Baker's yeast).